Here is a 192-residue protein sequence, read N- to C-terminus: 3-hydroxyanthranilate 3,4-dioxygenase (192 aa).

Arginine 50 lines the O2 pocket. Residues histidine 54, glutamate 60, and histidine 102 each contribute to the Fe cation site. Glutamate 60 serves as a coordination point for substrate. Substrate contacts are provided by arginine 106 and glutamate 116. A divalent metal cation-binding residues include cysteine 131, cysteine 134, cysteine 168, and cysteine 171.

This sequence belongs to the 3-HAO family. The cofactor is Fe(2+).

Its subcellular location is the cytoplasm. The catalysed reaction is 3-hydroxyanthranilate + O2 = (2Z,4Z)-2-amino-3-carboxymuconate 6-semialdehyde. The protein operates within cofactor biosynthesis; NAD(+) biosynthesis; quinolinate from L-kynurenine: step 3/3. Its function is as follows. Catalyzes the oxidative ring opening of 3-hydroxyanthranilate to 2-amino-3-carboxymuconate semialdehyde, which spontaneously cyclizes to quinolinate. The chain is 3-hydroxyanthranilate 3,4-dioxygenase from Coccidioides immitis (strain RS) (Valley fever fungus).